The chain runs to 132 residues: Small ribosomal subunit protein uS8 (132 aa).

Belongs to the universal ribosomal protein uS8 family. In terms of assembly, part of the 30S ribosomal subunit. Contacts proteins S5 and S12.

Its function is as follows. One of the primary rRNA binding proteins, it binds directly to 16S rRNA central domain where it helps coordinate assembly of the platform of the 30S subunit. This chain is Small ribosomal subunit protein uS8, found in Kineococcus radiotolerans (strain ATCC BAA-149 / DSM 14245 / SRS30216).